The sequence spans 677 residues: DNA gyrase subunit B, novobiocin-resistant (677 aa).

Residues 1–23 form a disordered region; the sequence is MTTYDTRTATDTRGSEQPGHVGT. The tract at residues 154 to 295 is novobiocin-binding; sequence IWTDGHRWTQ…RLLSAEIALQ (142 aa). The Toprim domain occupies 456-570; sequence SEIFIVEGDS…EGHVHLSRPP (115 aa). 3 residues coordinate Mg(2+): Glu462, Asp535, and Asp537.

It belongs to the type II topoisomerase GyrB family. In terms of assembly, heterotetramer, composed of two GyrA and two GyrB chains. In the heterotetramer, GyrA contains the active site tyrosine that forms a transient covalent intermediate with DNA, while GyrB binds cofactors and catalyzes ATP hydrolysis. Requires Mg(2+) as cofactor. It depends on Mn(2+) as a cofactor. The cofactor is Ca(2+).

It localises to the cytoplasm. The catalysed reaction is ATP-dependent breakage, passage and rejoining of double-stranded DNA.. Functionally, a type II topoisomerase that negatively supercoils closed circular double-stranded (ds) DNA in an ATP-dependent manner to modulate DNA topology and maintain chromosomes in an underwound state. Negative supercoiling favors strand separation, and DNA replication, transcription, recombination and repair, all of which involve strand separation. Also able to catalyze the interconversion of other topological isomers of dsDNA rings, including catenanes and knotted rings. Type II topoisomerases break and join 2 DNA strands simultaneously in an ATP-dependent manner. The chain is DNA gyrase subunit B, novobiocin-resistant from Streptomyces niveus (Streptomyces spheroides).